We begin with the raw amino-acid sequence, 106 residues long: Programmed cell death activator egl-1 (106 aa).

The BH3-like stretch occupies residues 73–81 (LAAMCDDFD).

As to quaternary structure, interacts with ced-9; the interaction results in ced-4 release from the ced-4/ced-9 complex. Interaction with ced-9 may enhance interaction of ced-9 with drp-1, but not with ced-4. A ced-9/egl-1 complex may recruit drp-1 to the mitochondrial surface.

It is found in the synapse. In terms of biological role, plays a major role in programmed cell death (PCD or apoptosis) by negatively regulating ced-9. Binds to and directly inhibits the activity of ced-9, releasing the cell death activator ced-4 from a ced-9/ced-4 containing protein complex and allowing ced-4 to activate the cell-killing caspase ced-3. Required to activate programmed cell death in the sister cells of the serotonergic neurosecretory motor (NSM) neurons during embryogenesis. Required to activate programmed cell death in the sister cells of the M4 motor neuron and I1 pharyngeal neuron during embryogenesis. During larval development, required for the elimination of transient presynaptic components upstream of ced-9, ced-4 and ced-3 apoptotic pathway. Together with ain-1, a component of the miRNA-induced-silencing complex (miRISC), and probably upstream of ced-3 and ced-4, regulates temporal cell fate patterning during larval development. Has been shown in two studies to be dispensable in mitochondrial dynamics and morphology during early embryonic development. However, one study shows that during larval development, egl-1 is involved in modulating mitochondrial dynamics, perhaps acting by stabilizing the interaction between ced-9 and drp-1 in order to promote mitochondrial fission. Involved in inducing mitochondrial fragmentation during apoptosis, probably acting via ced-9 and dynamin-related protein drp-1. In Caenorhabditis elegans, this protein is Programmed cell death activator egl-1.